The sequence spans 1356 residues: Vegetative incompatibility protein HET-E-1 (1356 aa).

In terms of domain architecture, NACHT spans arginine 294–lysine 629. GTP is bound at residue glycine 300–threonine 307. WD repeat units follow at residues glycine 839–aspartate 869, glycine 881–aspartate 911, glycine 923–aspartate 953, glycine 965–aspartate 995, glycine 1007–aspartate 1037, glycine 1049–aspartate 1079, glycine 1091–aspartate 1121, glycine 1133–aspartate 1163, glycine 1175–aspartate 1205, and glycine 1217–aspartate 1247.

Its function is as follows. Responsible for vegetative incompatibility through specific interactions with different alleles of the unlinked gene, het-c. The protein is Vegetative incompatibility protein HET-E-1 (HET-E1) of Podospora anserina (Pleurage anserina).